A 270-amino-acid polypeptide reads, in one-letter code: Tryptophan synthase alpha chain (270 aa).

Catalysis depends on proton acceptor residues Glu-60 and Asp-71.

This sequence belongs to the TrpA family. In terms of assembly, tetramer of two alpha and two beta chains.

The catalysed reaction is (1S,2R)-1-C-(indol-3-yl)glycerol 3-phosphate + L-serine = D-glyceraldehyde 3-phosphate + L-tryptophan + H2O. It functions in the pathway amino-acid biosynthesis; L-tryptophan biosynthesis; L-tryptophan from chorismate: step 5/5. Its function is as follows. The alpha subunit is responsible for the aldol cleavage of indoleglycerol phosphate to indole and glyceraldehyde 3-phosphate. The protein is Tryptophan synthase alpha chain of Deinococcus radiodurans (strain ATCC 13939 / DSM 20539 / JCM 16871 / CCUG 27074 / LMG 4051 / NBRC 15346 / NCIMB 9279 / VKM B-1422 / R1).